The primary structure comprises 385 residues: HAT1-interacting factor 1 (385 aa).

Residues 80–199 (GNLFGDALLA…RKSGFHIYFE (120 aa)) form an important for interaction with heterotetrameric histone H3 and H4 and for interaction with dimeric histone H2A and H2B region. 2 stretches are compositionally biased toward low complexity: residues 85 to 97 (DALLAGDDGSGSE) and 105 to 116 (DVSNGEEGNENG). The tract at residues 85-163 (DALLAGDDGS…EEENVEKEEE (79 aa)) is disordered. Residues 129–160 (DQEEEDLTGDVDSGDSEDSGEGSEEEEENVEK) are compositionally biased toward acidic residues. At S174 the chain carries Phosphoserine. 3 TPR repeats span residues 186-220 (VSQLRKSGFHIYFENDLYENALDLLAQALMLLGRP), 229-262 (ENSRLRIGDVYILMGDIEREAEMFSRAIHHYLKA), and 289-322 (ALRWVDQVPAKDKLKRFKHAKALLEKHMTTRPKD). The interval 248-332 (EAEMFSRAIH…SELQQARLAQ (85 aa)) is interaction with dimeric histone H2A and H2B. Residues 340–385 (VQENQQHGSKRPLSQPTTSIGFPALEKPLGDFNDLSQLVKKKPRRH) are disordered. Positions 342 to 359 (ENQQHGSKRPLSQPTTSI) are enriched in polar residues.

It belongs to the NASP family. In terms of assembly, homodimer. The homodimer interacts with a histone tetramer containing H3 and H4; the interaction is direct. The homodimer interacts with heterodimeric histone H2A and H2B; the interaction is direct. Component of the nuclear histone acetyltransferase B (HAT-B) complex composed of at least HAT1, HAT2 and HIF1. Does not interact with HAT1 in the absence of HAT2. Interacts with histones H3 and H4 in a HAT1/HAT2 dependent manner. Interaction with heterotetrameric histone H3 and H4 precludes interaction with dimeric histone H2A and H2B, irrespective of the fact that their binding involves non-identical regions of the protein.

The protein resides in the nucleus. In terms of biological role, histone H3 and H4 specific chaperone component of the nuclear histone acetyltransferase B (HAT-B) complex. Involved in chromatin assembly and telomere silencing. This chain is HAT1-interacting factor 1 (HIF1), found in Saccharomyces cerevisiae (strain ATCC 204508 / S288c) (Baker's yeast).